The following is a 138-amino-acid chain: Salivary protein 15 Iper-3 (138 aa).

The first 21 residues, methionine 1–valine 21, serve as a signal peptide directing secretion. Residues asparagine 30, asparagine 42, asparagine 68, asparagine 107, and asparagine 127 are each glycosylated (N-linked (GlcNAc...) asparagine). Residues glycine 119 to cysteine 138 form a CD4-binding region.

This sequence belongs to the salp15 family. In terms of assembly, interacts with host CD4. Interacts with host DC-SIGN (CD209). Interacts with Borrelia outer surface protein C (OspC). In terms of tissue distribution, expressed in salivary glands.

It is found in the secreted. In terms of biological role, salivary tick protein that downregulates host immune system by binding to both dendritic cells, and CD4(+) T cells. Specifically binds to the CD4 coreceptor on T cells. This interaction prevents the activation of the Src kinase, Lck, and its downstream substrate Zap-70, and results in deficient activation of PLCgamma1, the repression of calcium fluxes triggered by T-cell antigen receptor (TCR) ligation, and a subsequent reduction in interleukin-2 production. This salivary protein also binds to DC-SIGN (CD209) on dendritic cells (DC) and activates the Raf-1 kinase/MEK signaling pathway that results in down-regulating expression of pro-inflammatory cytokines. Furthermore, it inhibits T cell proliferation induced by DCs. It also inhibits in vitro keratinocyte inflammation induced by Borrelia burgdorferi or by the major outer surface protein (OspC) of Borrelia. In addition, it downregulates chemokines and monocyte chemoattractant protein 1, as well as several antimicrobial peptides such as defensins, cathelicidin, psoriasin, and RNase 7. Apart from its immunomodulatory activities, it is also associated with protection of Borrelia spirochetes from antibody-mediated killing through its binding to OspC. In vivo, tests on different immune disease animal models show promising therapeutic results, e.g., in inhibiting HIV infection, experimental autoimmune encephalomyelitis, transplantation rejection, and asthma. This is Salivary protein 15 Iper-3 from Ixodes persulcatus (Taiga tick).